Consider the following 262-residue polypeptide: Phosphatidylglycerol--prolipoprotein diacylglyceryl transferase (262 aa).

The next 4 helical transmembrane spans lie at 17 to 37 (FAIH…LLLG), 59 to 79 (LLFA…TLFY), 94 to 114 (IWEG…ALYW), and 121 to 141 (TTFF…LAFG). Arginine 142 lines the a 1,2-diacyl-sn-glycero-3-phospho-(1'-sn-glycerol) pocket. A run of 3 helical transmembrane segments spans residues 176–196 (QIYQ…FYAG), 201–221 (VGQV…LAEY), and 231–251 (LLGL…FFGI).

This sequence belongs to the Lgt family.

The protein localises to the cell inner membrane. The enzyme catalyses L-cysteinyl-[prolipoprotein] + a 1,2-diacyl-sn-glycero-3-phospho-(1'-sn-glycerol) = an S-1,2-diacyl-sn-glyceryl-L-cysteinyl-[prolipoprotein] + sn-glycerol 1-phosphate + H(+). Its pathway is protein modification; lipoprotein biosynthesis (diacylglyceryl transfer). Functionally, catalyzes the transfer of the diacylglyceryl group from phosphatidylglycerol to the sulfhydryl group of the N-terminal cysteine of a prolipoprotein, the first step in the formation of mature lipoproteins. This is Phosphatidylglycerol--prolipoprotein diacylglyceryl transferase from Polynucleobacter necessarius subsp. necessarius (strain STIR1).